The chain runs to 310 residues: HTH-type transcriptional regulator PunR (310 aa).

Residues 2-59 enclose the HTH lysR-type domain; sequence WSEYSLEVVDAVARNGSFSAAAQELHRVPSAVSYTVRQLEEWLAVPLFERRHRDVELT. A DNA-binding region (H-T-H motif) is located at residues 19-38; the sequence is FSAAAQELHRVPSAVSYTVR.

It belongs to the LysR transcriptional regulatory family.

It localises to the cytoplasm. In terms of biological role, transcriptional regulator that activates the expression of punC, which encodes a purine nucleoside transporter. This is HTH-type transcriptional regulator PunR from Escherichia coli O157:H7.